Consider the following 438-residue polypeptide: L-cysteine:1D-myo-inositol 2-amino-2-deoxy-alpha-D-glucopyranoside ligase (438 aa).

A disordered region spans residues 1–27 (MDSWTSPDVPALPFTAEGPRVHDTARG). Position 45 (cysteine 45) interacts with Zn(2+). Residues 45–48 (CGIT), threonine 60, and 83–85 (NVT) contribute to the L-cysteinyl-5'-AMP site. Positions 47 to 57 (ITPYDATHLGH) match the 'HIGH' region motif. The 'ERGGDP' region motif lies at 197–202 (DRGGDP). Tryptophan 238 contributes to the L-cysteinyl-5'-AMP binding site. Position 242 (cysteine 242) interacts with Zn(2+). Residue 260–262 (GDD) participates in L-cysteinyl-5'-AMP binding. Histidine 267 serves as a coordination point for Zn(2+). Residue valine 293 coordinates L-cysteinyl-5'-AMP. The 'KMSKS' region signature appears at 299–303 (KMSKS).

It belongs to the class-I aminoacyl-tRNA synthetase family. MshC subfamily. Monomer. The cofactor is Zn(2+).

It carries out the reaction 1D-myo-inositol 2-amino-2-deoxy-alpha-D-glucopyranoside + L-cysteine + ATP = 1D-myo-inositol 2-(L-cysteinylamino)-2-deoxy-alpha-D-glucopyranoside + AMP + diphosphate + H(+). Its function is as follows. Catalyzes the ATP-dependent condensation of GlcN-Ins and L-cysteine to form L-Cys-GlcN-Ins. This Kytococcus sedentarius (strain ATCC 14392 / DSM 20547 / JCM 11482 / CCUG 33030 / NBRC 15357 / NCTC 11040 / CCM 314 / 541) (Micrococcus sedentarius) protein is L-cysteine:1D-myo-inositol 2-amino-2-deoxy-alpha-D-glucopyranoside ligase.